The sequence spans 320 residues: MRSAQVYRWQIPMDAGMVLRDRRLKTRDGLYVCLREGEREGWGEISPLPGFSQETWEEAQIVLLAWVNNWLAGDGELPQMPSVAFGVSCALAELADTLPQAANYRAAPLCNGDPDDLILKLADMPGEKVAKVKVGLYEAVRDGMVVNLLLEAIPDLHLRLDANRAWTPLKGQQFAKYVNPDYRHRIAFLEEPCKTRDDSRAFARETGIAIAWDESLREPDFAFVAEEGVRAVVIKPTLTGSLEKVREQVQAAHALGLTAVISSSIESSLGLTQLARIAAWLTPDTIPGLDTLDLMQAQQVRRWPGSPLPLVDADVLEQLL.

Lys-133 (proton donor) is an active-site residue. Residues Asp-161, Glu-190, and Asp-213 each coordinate Mg(2+). Residue Lys-235 is the Proton acceptor of the active site.

Belongs to the mandelate racemase/muconate lactonizing enzyme family. MenC type 1 subfamily. A divalent metal cation is required as a cofactor.

The catalysed reaction is (1R,6R)-6-hydroxy-2-succinyl-cyclohexa-2,4-diene-1-carboxylate = 2-succinylbenzoate + H2O. It participates in quinol/quinone metabolism; 1,4-dihydroxy-2-naphthoate biosynthesis; 1,4-dihydroxy-2-naphthoate from chorismate: step 4/7. It functions in the pathway quinol/quinone metabolism; menaquinone biosynthesis. Its function is as follows. Converts 2-succinyl-6-hydroxy-2,4-cyclohexadiene-1-carboxylate (SHCHC) to 2-succinylbenzoate (OSB). The sequence is that of o-succinylbenzoate synthase from Shigella sonnei (strain Ss046).